Consider the following 412-residue polypeptide: Indian hedgehog B protein (412 aa).

Residues 1–23 (MRLSTAAALLTGFILAFSPAYDG) form the signal peptide. Cys24 is lipidated: N-palmitoyl cysteine. Ca(2+)-binding residues include Glu89, Glu90, Asp95, Thr125, Glu126, Asp129, and Asp131. The Zn(2+) site is built by His140, Asp147, and His182. The Cholesterol glycine ester moiety is linked to residue Gly197.

This sequence belongs to the hedgehog family. In terms of assembly, multimer. As to quaternary structure, interacts with BOC and CDON. Interacts with PTCH1. Interacts with glypican GPC3. Cholesterylation is required for N-product targeting to lipid rafts and multimerization. Post-translationally, the C-terminal domain displays an autoproteolysis activity and a cholesterol transferase activity. Both activities result in the cleavage of the full-length protein and covalent attachment of a cholesterol moiety to the C-terminal of the newly generated N-product. The N-product is the active species in both local and long-range signaling, whereas the C-product is degraded in the endoplasmic reticulum. In terms of processing, N-palmitoylation by HHAT of N-product is required for indian hedgehog protein N-product multimerization and full activity. In terms of tissue distribution, expressed exclusively in the notochord.

Its subcellular location is the cell membrane. It localises to the endoplasmic reticulum membrane. It is found in the golgi apparatus membrane. The protein resides in the secreted. The catalysed reaction is glycyl-L-cysteinyl-[protein] + cholesterol + H(+) = [protein]-C-terminal glycyl cholesterol ester + N-terminal L-cysteinyl-[protein]. In terms of biological role, signal involved in the early induction and patterning of anterodorsal ectoderm, nervous system and somites. It is involved in the regulation of endochondral skeleton formation, and the development of retinal pigment epithelium (RPE), photoreceptors and periocular tissues. Functionally, the C-terminal part of the indian hedgehog protein precursor displays an autoproteolysis and a cholesterol transferase activity. Both activities result in the cleavage of the full-length protein into two parts followed by the covalent attachment of a cholesterol moiety to the C-terminal of the newly generated N-product. Both activities occur in the endoplasmic reticulum. The dually lipidated indian hedgehog protein N-product is a morphogen which is essential for a variety of patterning events during development. Binds to the patched (PTCH1) receptor, which functions in association with smoothened (SMO), to activate the transcription of target genes. In the notochord, induces somite patterning and muscle pioneer differentiation. The protein is Indian hedgehog B protein (ihhb) of Danio rerio (Zebrafish).